The following is a 324-amino-acid chain: NADH-ubiquinone oxidoreductase chain 1 (324 aa).

Transmembrane regions (helical) follow at residues 10–30 (MIMT…LTLV), 76–96 (FLFI…WIPL), 107–127 (LGLL…LWSG), 143–163 (VAQT…TIML), 178–198 (PIYL…STLA), 229–249 (LFFL…ITLF), 260–280 (ELFS…FLWV), and 300–320 (FLPL…SYAG).

This sequence belongs to the complex I subunit 1 family.

The protein resides in the mitochondrion inner membrane. It catalyses the reaction a ubiquinone + NADH + 5 H(+)(in) = a ubiquinol + NAD(+) + 4 H(+)(out). Functionally, core subunit of the mitochondrial membrane respiratory chain NADH dehydrogenase (Complex I) that is believed to belong to the minimal assembly required for catalysis. Complex I functions in the transfer of electrons from NADH to the respiratory chain. The immediate electron acceptor for the enzyme is believed to be ubiquinone. The polypeptide is NADH-ubiquinone oxidoreductase chain 1 (MT-ND1) (Excalfactoria chinensis (Blue-breasted quail)).